The following is a 519-amino-acid chain: DDB1- and CUL4-associated factor 17 (519 aa).

2 helical membrane-spanning segments follow: residues 186 to 206 (VLLY…ILEI) and 222 to 242 (GILI…QAII).

In terms of assembly, interacts with DDB1, CUL4A and CUL4B. As to expression, ubiquitously expressed in the embryo, with higher expression in brain, liver and skin tissues.

The protein resides in the membrane. The protein localises to the nucleus. It localises to the nucleolus. Its pathway is protein modification; protein ubiquitination. Its function is as follows. May function as a substrate receptor for CUL4-DDB1 E3 ubiquitin-protein ligase complex. In Mus musculus (Mouse), this protein is DDB1- and CUL4-associated factor 17 (Dcaf17).